The following is a 180-amino-acid chain: NAD(P)H-quinone oxidoreductase subunit I, chloroplastic (180 aa).

4Fe-4S ferredoxin-type domains are found at residues 55-84 (GRIH…VHWR) and 95-124 (LNYS…MTEE). Residues Cys-64, Cys-67, Cys-70, Cys-74, Cys-104, Cys-107, Cys-110, and Cys-114 each coordinate [4Fe-4S] cluster.

Belongs to the complex I 23 kDa subunit family. As to quaternary structure, NDH is composed of at least 16 different subunits, 5 of which are encoded in the nucleus. [4Fe-4S] cluster is required as a cofactor.

It is found in the plastid. The protein localises to the chloroplast thylakoid membrane. It carries out the reaction a plastoquinone + NADH + (n+1) H(+)(in) = a plastoquinol + NAD(+) + n H(+)(out). The catalysed reaction is a plastoquinone + NADPH + (n+1) H(+)(in) = a plastoquinol + NADP(+) + n H(+)(out). Its function is as follows. NDH shuttles electrons from NAD(P)H:plastoquinone, via FMN and iron-sulfur (Fe-S) centers, to quinones in the photosynthetic chain and possibly in a chloroplast respiratory chain. The immediate electron acceptor for the enzyme in this species is believed to be plastoquinone. Couples the redox reaction to proton translocation, and thus conserves the redox energy in a proton gradient. This Calycanthus floridus var. glaucus (Eastern sweetshrub) protein is NAD(P)H-quinone oxidoreductase subunit I, chloroplastic.